The primary structure comprises 296 residues: 4-diphosphocytidyl-2-C-methyl-D-erythritol kinase (296 aa).

Residue Lys11 is part of the active site. An ATP-binding site is contributed by 95 to 105; it reads PVAAGMAGGSS. The active site involves Asp137.

Belongs to the GHMP kinase family. IspE subfamily.

The enzyme catalyses 4-CDP-2-C-methyl-D-erythritol + ATP = 4-CDP-2-C-methyl-D-erythritol 2-phosphate + ADP + H(+). It functions in the pathway isoprenoid biosynthesis; isopentenyl diphosphate biosynthesis via DXP pathway; isopentenyl diphosphate from 1-deoxy-D-xylulose 5-phosphate: step 3/6. Catalyzes the phosphorylation of the position 2 hydroxy group of 4-diphosphocytidyl-2C-methyl-D-erythritol. In Clostridioides difficile (strain 630) (Peptoclostridium difficile), this protein is 4-diphosphocytidyl-2-C-methyl-D-erythritol kinase.